The chain runs to 660 residues: Arginine--tRNA ligase, cytoplasmic (660 aa).

The tract at residues 1–72 (MELPVCFYEE…LEEKKKSSKS (72 aa)) is could be involved in the assembly of the multisynthetase complex. Residues 200 to 202 (SPN), His211, Tyr384, Asp388, and Gln412 contribute to the L-arginine site. The 'HIGH' region motif lies at 201-212 (PNIAKEMHVGHL). The segment at 529–543 (NTAAYLLYAYTRIRS) is interaction with tRNA.

The protein belongs to the class-I aminoacyl-tRNA synthetase family. As to quaternary structure, monomer; also part of a multisubunit complex that groups tRNA ligases for Arg, Asp, Glu, Gln, Ile, Leu, Lys, Met and Pro.

The protein localises to the cytoplasm. It is found in the cytosol. It catalyses the reaction tRNA(Arg) + L-arginine + ATP = L-arginyl-tRNA(Arg) + AMP + diphosphate. Its function is as follows. Forms part of a macromolecular complex that catalyzes the attachment of specific amino acids to cognate tRNAs during protein synthesis. This chain is Arginine--tRNA ligase, cytoplasmic (rars1), found in Xenopus tropicalis (Western clawed frog).